Here is a 366-residue protein sequence, read N- to C-terminus: Aminomethyltransferase (366 aa).

This sequence belongs to the GcvT family. As to quaternary structure, the glycine cleavage system is composed of four proteins: P, T, L and H.

The catalysed reaction is N(6)-[(R)-S(8)-aminomethyldihydrolipoyl]-L-lysyl-[protein] + (6S)-5,6,7,8-tetrahydrofolate = N(6)-[(R)-dihydrolipoyl]-L-lysyl-[protein] + (6R)-5,10-methylene-5,6,7,8-tetrahydrofolate + NH4(+). Functionally, the glycine cleavage system catalyzes the degradation of glycine. The polypeptide is Aminomethyltransferase (Bordetella pertussis (strain Tohama I / ATCC BAA-589 / NCTC 13251)).